The sequence spans 3390 residues: Genome polyprotein (3390 aa).

An interaction with host EXOC1 region spans residues 1–15 (MNNQRKKTGKPSINM). At 1–100 (MNNQRKKTGK…MLSIINKRKK (100 aa)) the chain is on the cytoplasmic side. The tract at residues 37 to 72 (LLNGQGPMKLVMAFIAFLRFLAIPPTAGVLARWGTF) is hydrophobic; homodimerization of capsid protein C. The propeptide at 101-114 (TSLCLMMMLPATLA) is ER anchor for the capsid protein C, removed in mature form by serine protease NS3. A helical transmembrane segment spans residues 101–118 (TSLCLMMMLPATLAFHLT). Topologically, residues 119-243 (SRDGEPRMIV…VEKVETWALR (125 aa)) are extracellular. Asn183 carries an N-linked (GlcNAc...) asparagine; by host glycan. The chain crosses the membrane as a helical span at residues 244 to 264 (HPGFTILALFLAHYIGTSLTQ). A topological domain (cytoplasmic) is located at residue Lys265. A helical transmembrane segment spans residues 266 to 280 (VVIFILLMLVTPSMT). The Extracellular segment spans residues 281–723 (MRCVGVGNRD…VHQIFGSAYT (443 aa)). Disulfide bonds link Cys283–Cys310, Cys340–Cys401, Cys354–Cys385, and Cys372–Cys396. A glycan (N-linked (GlcNAc...) asparagine; by host) is linked at Asn347. The interval 378-391 (DRGWGNGCGLFGKG) is fusion peptide. The N-linked (GlcNAc...) asparagine; by host glycan is linked to Asn433. 2 disulfide bridges follow: Cys463-Cys563 and Cys580-Cys611. A helical membrane pass occupies residues 724 to 744 (ALFSGVSWIMKIGIGVLLTWI). Residues 745 to 750 (GLNSKN) lie on the Cytoplasmic side of the membrane. Residues 751–771 (TSMSFSCIAIGIITLYLGVVV) form a helical membrane-spanning segment. The Extracellular portion of the chain corresponds to 772–1193 (QADMGCVINW…MIGSNASDRM (422 aa)). Intrachain disulfides connect Cys777/Cys788, Cys828/Cys916, Cys952/Cys996, Cys1053/Cys1102, Cys1064/Cys1086, and Cys1085/Cys1089. Residues Asn903 and Asn980 are each glycosylated (N-linked (GlcNAc...) asparagine; by host). N-linked (GlcNAc...) asparagine; by host glycosylation is found at Asn1132 and Asn1188. Residues 1194 to 1218 (GMGVTYLALIATFKIQPFLALGFFL) traverse the membrane as a helical segment. At 1219–1224 (RKLTSR) the chain is on the cytoplasmic side. A helical transmembrane segment spans residues 1225-1243 (ENLLLGVGLAMAATLRLPE). Residues 1244–1267 (DIEQMANGIALGLMALKLITQFET) are Lumenal-facing. The chain crosses the membrane as a helical span at residues 1268–1288 (YQLWTALVSLTCSNTIFTLTV). Residue Ala1289 is a topological domain, cytoplasmic. Residues 1290–1308 (WRTATLILAGISLLPVCQS) traverse the membrane as a helical segment. At 1309–1315 (SSMRKTD) the chain is on the lumenal side. A helical membrane pass occupies residues 1316–1336 (WLPMTVAAMGVPPLPLFIFSL). Over 1337–1344 (KDTLKRRS) the chain is Cytoplasmic. Residues 1345-1365 (WPLNEGVMAVGLVSILASSLL) traverse the membrane as a helical segment. At 1366 to 1368 (RND) the chain is on the lumenal side. Residues 1369–1389 (VPMAGPLVAGGLLIACYVITG) form a helical membrane-spanning segment. Residues 1390 to 1443 (TSADLTVEKAADVTWEEEAEQTGVSHNLMITVDDDGTMRIKDDETENILTVLLK) are Cytoplasmic-facing. An interacts with and activates NS3 protease region spans residues 1396–1435 (VEKAADVTWEEEAEQTGVSHNLMITVDDDGTMRIKDDETE). Residues 1444-1464 (TALLIVSGIFPCSIPATLLVW) constitute an intramembrane region (helical). Over 1465–2146 (HTWQKQTQRS…VEELPETMET (682 aa)) the chain is Cytoplasmic. Positions 1474–1651 (SGVLWDVPSP…NAEPDGPTPE (178 aa)) constitute a Peptidase S7 domain. Active-site charge relay system; for serine protease NS3 activity residues include His1524, Asp1548, and Ser1608. Residues 1654–1810 (EEMFKKRNLT…QSNAPIQDEE (157 aa)) enclose the Helicase ATP-binding domain. An important for RNA-binding region spans residues 1658–1661 (KKRN). 1667–1674 (LHPGSGKT) contributes to the ATP binding site. The short motif at 1758–1761 (DEAH) is the DEAH box element. The Helicase C-terminal domain occupies 1821–1986 (GNEWITDFVG…GIIPALFEPE (166 aa)). Lys1862 carries the N6-acetyllysine; by host modification. Residues 2147-2167 (LLLLGLMILLTGGAMLFLISG) form a helical membrane-spanning segment. At 2168 to 2169 (KG) the chain is on the lumenal side. An intramembrane region (helical) is located at residues 2170 to 2190 (IGKTSIGLICVIASSGMLWMA). Residue Asp2191 is a topological domain, lumenal. The helical transmembrane segment at 2192–2212 (VPLQWIASAIVLEFFMMVLLI) threads the bilayer. At 2213 to 2227 (PEPEKQRTPQDNQLA) the chain is on the cytoplasmic side. The chain crosses the membrane as a helical span at residues 2228-2248 (YVVIGILTLAAIVAANEMGLL). The Lumenal segment spans residues 2249 to 2273 (ETTKRDLGMSKEPGVVSPTSYLDVD). An intramembrane region (helical) is located at residues 2274 to 2294 (LHPASAWTLYAVATTVITPML). Topologically, residues 2295–2305 (RHTIENSTANV) are lumenal. N-linked (GlcNAc...) asparagine; by host glycans are attached at residues Asn2300 and Asn2304. Residues 2306–2326 (SLAAIANQAVVLMGLDKGWPI) constitute an intramembrane region (helical). The Lumenal segment spans residues 2327-2346 (SKMDLGVPLLALGCYSQVNP). A helical transmembrane segment spans residues 2347–2367 (LTLIAAVLLLVTHYAIIGPGL). Topologically, residues 2368 to 2412 (QAKATREAQKRTAAGIMKNPTVDGIMTIDLDPVIYDSKFEKQLGQ) are cytoplasmic. A helical membrane pass occupies residues 2413–2433 (VMLLVLCAVQLLLMRTSWALC). Over 2434 to 2458 (EVLTLATGPITTLWEGSPGKFWNTT) the chain is Lumenal. Asn2456 carries an N-linked (GlcNAc...) asparagine; by host glycan. The helical transmembrane segment at 2459–2479 (IAVSMANIFRGSYLAGAGLAF) threads the bilayer. Residues 2480–3390 (SIMKSVGTGK…KEEESEGAIW (911 aa)) are Cytoplasmic-facing. Residues 2492 to 2753 (TGSQGETLGE…DVDLGAGTRH (262 aa)) form the mRNA cap 0-1 NS5-type MT domain. Residue Ser2546 coordinates S-adenosyl-L-methionine. A Phosphoserine modification is found at Ser2546. Catalysis depends on Lys2551, which acts as the For 2'-O-MTase activity. Positions 2567–2570 (VIDL) match the SUMO-interacting motif motif. Positions 2576, 2577, 2594, 2595, 2621, and 2622 each coordinate S-adenosyl-L-methionine. Asp2636 acts as the For 2'-O-MTase activity in catalysis. Ile2637 lines the S-adenosyl-L-methionine pocket. Active-site for 2'-O-MTase activity residues include Lys2670 and Glu2706. Residue Tyr2708 participates in S-adenosyl-L-methionine binding. Positions 2927, 2931, 2936, and 2939 each coordinate Zn(2+). Residues 3018–3168 (AMYADDTAGW…PIDDRFANAL (151 aa)) form the RdRp catalytic domain. Zn(2+)-binding residues include His3202, Cys3218, and Cys3337.

The protein in the N-terminal section; belongs to the class I-like SAM-binding methyltransferase superfamily. mRNA cap 0-1 NS5-type methyltransferase family. As to quaternary structure, homodimer. Interacts (via N-terminus) with host EXOC1 (via C-terminus); this interaction results in EXOC1 degradation through the proteasome degradation pathway. In terms of assembly, forms heterodimers with envelope protein E in the endoplasmic reticulum and Golgi. Homodimer; in the endoplasmic reticulum and Golgi. Interacts with protein prM. Interacts with non-structural protein 1. As to quaternary structure, homodimer; Homohexamer when secreted. Interacts with envelope protein E. In terms of assembly, interacts (via N-terminus) with serine protease NS3. Forms a heterodimer with serine protease NS3. May form homooligomers. As to quaternary structure, forms a heterodimer with NS2B. Interacts with NS4B. Interacts with unphosphorylated RNA-directed RNA polymerase NS5; this interaction stimulates RNA-directed RNA polymerase NS5 guanylyltransferase activity. In terms of assembly, interacts with host MAVS; this interaction inhibits the synthesis of IFN-beta. Interacts with host AUP1; the interaction occurs in the presence of Dengue virus NS4B and induces lipophagy which facilitates production of virus progeny particles. Interacts with serine protease NS3. As to quaternary structure, homodimer. Interacts with host STAT2; this interaction inhibits the phosphorylation of the latter, and, when all viral proteins are present (polyprotein), targets STAT2 for degradation. Interacts with serine protease NS3. Specific enzymatic cleavages in vivo yield mature proteins. Cleavages in the lumen of endoplasmic reticulum are performed by host signal peptidase, whereas cleavages in the cytoplasmic side are performed by serine protease NS3. Signal cleavage at the 2K-4B site requires a prior NS3 protease-mediated cleavage at the 4A-2K site. Post-translationally, cleaved in post-Golgi vesicles by a host furin, releasing the mature small envelope protein M, and peptide pr. This cleavage is incomplete as up to 30% of viral particles still carry uncleaved prM. In terms of processing, N-glycosylated. N-glycosylated. The excreted form is glycosylated and this is required for efficient secretion of the protein from infected cells. Post-translationally, acetylated by host KAT5. Acetylation modulates NS3 RNA-binding and unwinding activities and plays an important positive role for viral replication. In terms of processing, sumoylation of RNA-directed RNA polymerase NS5 increases NS5 protein stability allowing proper viral RNA replication. Phosphorylated on serines residues. This phosphorylation may trigger NS5 nuclear localization.

The protein localises to the virion. It localises to the host nucleus. The protein resides in the host cytoplasm. Its subcellular location is the host perinuclear region. It is found in the secreted. The protein localises to the virion membrane. It localises to the host endoplasmic reticulum membrane. The protein resides in the host mitochondrion. It catalyses the reaction Selective hydrolysis of -Xaa-Xaa-|-Yaa- bonds in which each of the Xaa can be either Arg or Lys and Yaa can be either Ser or Ala.. The enzyme catalyses RNA(n) + a ribonucleoside 5'-triphosphate = RNA(n+1) + diphosphate. It carries out the reaction a ribonucleoside 5'-triphosphate + H2O = a ribonucleoside 5'-diphosphate + phosphate + H(+). The catalysed reaction is ATP + H2O = ADP + phosphate + H(+). It catalyses the reaction a 5'-end (5'-triphosphoguanosine)-ribonucleoside in mRNA + S-adenosyl-L-methionine = a 5'-end (N(7)-methyl 5'-triphosphoguanosine)-ribonucleoside in mRNA + S-adenosyl-L-homocysteine. The enzyme catalyses a 5'-end (N(7)-methyl 5'-triphosphoguanosine)-ribonucleoside in mRNA + S-adenosyl-L-methionine = a 5'-end (N(7)-methyl 5'-triphosphoguanosine)-(2'-O-methyl-ribonucleoside) in mRNA + S-adenosyl-L-homocysteine + H(+). Plays a role in virus budding by binding to the cell membrane and gathering the viral RNA into a nucleocapsid that forms the core of a mature virus particle. During virus entry, may induce genome penetration into the host cytoplasm after hemifusion induced by the surface proteins. Can migrate to the cell nucleus where it modulates host functions. Overcomes the anti-viral effects of host EXOC1 by sequestering and degrading the latter through the proteasome degradation pathway. Functionally, inhibits RNA silencing by interfering with host Dicer. Its function is as follows. Prevents premature fusion activity of envelope proteins in trans-Golgi by binding to envelope protein E at pH6.0. After virion release in extracellular space, gets dissociated from E dimers. In terms of biological role, acts as a chaperone for envelope protein E during intracellular virion assembly by masking and inactivating envelope protein E fusion peptide. prM is the only viral peptide matured by host furin in the trans-Golgi network probably to avoid catastrophic activation of the viral fusion activity in acidic Golgi compartment prior to virion release. prM-E cleavage is inefficient, and many virions are only partially matured. These uncleaved prM would play a role in immune evasion. May play a role in virus budding. Exerts cytotoxic effects by activating a mitochondrial apoptotic pathway through M ectodomain. May display a viroporin activity. Functionally, binds to host cell surface receptor and mediates fusion between viral and cellular membranes. Envelope protein is synthesized in the endoplasmic reticulum in the form of heterodimer with protein prM. They play a role in virion budding in the ER, and the newly formed immature particle is covered with 60 spikes composed of heterodimer between precursor prM and envelope protein E. The virion is transported to the Golgi apparatus where the low pH causes dissociation of PrM-E heterodimers and formation of E homodimers. prM-E cleavage is inefficient, and many virions are only partially matured. These uncleaved prM would play a role in immune evasion. Its function is as follows. Involved in immune evasion, pathogenesis and viral replication. Once cleaved off the polyprotein, is targeted to three destinations: the viral replication cycle, the plasma membrane and the extracellular compartment. Essential for viral replication. Required for formation of the replication complex and recruitment of other non-structural proteins to the ER-derived membrane structures. Excreted as a hexameric lipoparticle that plays a role against host immune response. Antagonizing the complement function. Binds to the host macrophages and dendritic cells. Inhibits signal transduction originating from Toll-like receptor 3 (TLR3). In terms of biological role, disrupts the host endothelial glycocalyx layer of host pulmonary microvascular endothelial cells, inducing degradation of sialic acid and shedding of heparan sulfate proteoglycans. NS1 induces expression of sialidases, heparanase, and activates cathepsin L, which activates heparanase via enzymatic cleavage. These effects are probably linked to the endothelial hyperpermeability observed in severe dengue disease. Component of the viral RNA replication complex that functions in virion assembly and antagonizes the host immune response. Functionally, required cofactor for the serine protease function of NS3. May have membrane-destabilizing activity and form viroporins. Its function is as follows. Displays three enzymatic activities: serine protease, NTPase and RNA helicase. NS3 serine protease, in association with NS2B, performs its autocleavage and cleaves the polyprotein at dibasic sites in the cytoplasm: C-prM, NS2A-NS2B, NS2B-NS3, NS3-NS4A, NS4A-2K and NS4B-NS5. NS3 RNA helicase binds RNA and unwinds dsRNA in the 3' to 5' direction. In terms of biological role, regulates the ATPase activity of the NS3 helicase activity. NS4A allows NS3 helicase to conserve energy during unwinding. Plays a role in the inhibition of the host innate immune response. Interacts with host MAVS and thereby prevents the interaction between RIGI and MAVS. In turn, IFN-beta production is impaired. Interacts with host AUP1 which mediates induction of lipophagy in host cells and facilitates production of virus progeny particles. Functions as a signal peptide for NS4B and is required for the interferon antagonism activity of the latter. Functionally, induces the formation of ER-derived membrane vesicles where the viral replication takes place. Inhibits interferon (IFN)-induced host STAT1 phosphorylation and nuclear translocation, thereby preventing the establishment of cellular antiviral state by blocking the IFN-alpha/beta pathway. Its function is as follows. Replicates the viral (+) and (-) RNA genome, and performs the capping of genomes in the cytoplasm. NS5 methylates viral RNA cap at guanine N-7 and ribose 2'-O positions. Besides its role in RNA genome replication, also prevents the establishment of cellular antiviral state by blocking the interferon-alpha/beta (IFN-alpha/beta) signaling pathway. Inhibits host TYK2 and STAT2 phosphorylation, thereby preventing activation of JAK-STAT signaling pathway. The sequence is that of Genome polyprotein from Dengue virus type 3 (strain China/80-2/1980) (DENV-3).